We begin with the raw amino-acid sequence, 240 residues long: MAAIKDENNDHLVQSDNPEHPSNLIPALCRNFYSHGWVTGTGGGASIKRDNHIFIAPSGVQKELIQPHDIFVLQYPTPKYPPSARQYIRKPLELKPSACTPLFLAAFDRGAGCCIHTHSQWAVLVTLLVEREKGPEGCFEISNIEQIKGIPRGKGKGMLGFFDTLKIPIIENTAFEEDLTSSLEEAMEKYPDTYAVLVRRHGIYVWGDDVAKAKTQCESLDYLFQLAVEMHKLGLPWVKS.

Cys-99 lines the substrate pocket. 2 residues coordinate Zn(2+): His-116 and His-118. The active-site Proton donor/acceptor is the Glu-145. Residue His-201 coordinates Zn(2+).

It belongs to the aldolase class II family. MtnB subfamily. Zn(2+) is required as a cofactor.

It localises to the cytoplasm. The enzyme catalyses 5-(methylsulfanyl)-D-ribulose 1-phosphate = 5-methylsulfanyl-2,3-dioxopentyl phosphate + H2O. Its pathway is amino-acid biosynthesis; L-methionine biosynthesis via salvage pathway; L-methionine from S-methyl-5-thio-alpha-D-ribose 1-phosphate: step 2/6. Functionally, catalyzes the dehydration of methylthioribulose-1-phosphate (MTRu-1-P) into 2,3-diketo-5-methylthiopentyl-1-phosphate (DK-MTP-1-P). The chain is Methylthioribulose-1-phosphate dehydratase from Ajellomyces capsulatus (strain H143) (Darling's disease fungus).